Consider the following 209-residue polypeptide: Uridine kinase (209 aa).

12 to 19 (GGSASGKT) is an ATP binding site.

Belongs to the uridine kinase family.

The protein resides in the cytoplasm. It carries out the reaction uridine + ATP = UMP + ADP + H(+). The enzyme catalyses cytidine + ATP = CMP + ADP + H(+). The protein operates within pyrimidine metabolism; CTP biosynthesis via salvage pathway; CTP from cytidine: step 1/3. It participates in pyrimidine metabolism; UMP biosynthesis via salvage pathway; UMP from uridine: step 1/1. The polypeptide is Uridine kinase (Chloroflexus aurantiacus (strain ATCC 29366 / DSM 635 / J-10-fl)).